The primary structure comprises 343 residues: Uroporphyrinogen decarboxylase (343 aa).

Residues 23–27 (RQAGR), Asp-73, Tyr-151, Ser-206, and His-322 each bind substrate.

The protein belongs to the uroporphyrinogen decarboxylase family. In terms of assembly, homodimer.

Its subcellular location is the cytoplasm. It carries out the reaction uroporphyrinogen III + 4 H(+) = coproporphyrinogen III + 4 CO2. It participates in porphyrin-containing compound metabolism; protoporphyrin-IX biosynthesis; coproporphyrinogen-III from 5-aminolevulinate: step 4/4. Its function is as follows. Catalyzes the decarboxylation of four acetate groups of uroporphyrinogen-III to yield coproporphyrinogen-III. This chain is Uroporphyrinogen decarboxylase, found in Granulibacter bethesdensis (strain ATCC BAA-1260 / CGDNIH1).